The chain runs to 274 residues: MKKTAIALLAWFVSSASLAATPWQKITHPVPGAAQSIGSFANGCIIGADTLPVQSDNYQVMRTDQRRYFGHPDLVMFIQRLSHQAQQRGLGTVLIGDMGMPAGGRFNGGHASHQTGLDVDIFLQLPKTRWSQAQLLRPQALDLVSRDGKHVVPSRWSSDIASLIKLAAQDNDVTRIFVNPAIKQQLCLDAGSDRDWLRKVRPWFQHRAHMRVRLRCPADSLECEDQPLPPPGDGCGAELQSWFEPPKPGTTKPEKKTPPPLPPSCQALLDEHVL.

The first 19 residues, 1-19 (MKKTAIALLAWFVSSASLA), serve as a signal peptide directing secretion. 3 disulfide bridges follow: cysteine 44–cysteine 265, cysteine 187–cysteine 235, and cysteine 216–cysteine 223. Zn(2+)-binding residues include histidine 110, histidine 113, aspartate 120, aspartate 147, and histidine 150. The segment at 225–274 (DQPLPPPGDGCGAELQSWFEPPKPGTTKPEKKTPPPLPPSCQALLDEHVL) is disordered.

Belongs to the peptidase M74 family. As to quaternary structure, dimer. The cofactor is Zn(2+).

The protein resides in the periplasm. Functionally, murein endopeptidase that cleaves the D-alanyl-meso-2,6-diamino-pimelyl amide bond that connects peptidoglycan strands. Likely plays a role in the removal of murein from the sacculus. The sequence is that of Penicillin-insensitive murein endopeptidase from Salmonella paratyphi A (strain ATCC 9150 / SARB42).